We begin with the raw amino-acid sequence, 635 residues long: Extracellular metalloproteinase 1 (635 aa).

Residues 1–19 (MHGLLLAAGLLSLPLHVLA) form the signal peptide. The propeptide occupies 20 to 246 (HPQPSTSTSL…VHNVVDYVAH (227 aa)). Asn287 is a glycosylation site (N-linked (GlcNAc...) asparagine). His430 provides a ligand contact to Zn(2+). The active site involves Glu431. Residue His434 participates in Zn(2+) binding. N-linked (GlcNAc...) asparagine glycans are attached at residues Asn475, Asn594, and Asn623.

It belongs to the peptidase M36 family. Zn(2+) serves as cofactor.

Its subcellular location is the secreted. Its function is as follows. Secreted metalloproteinase probably acting as a virulence factor. The protein is Extracellular metalloproteinase 1 (MEP1) of Arthroderma benhamiae (Trichophyton mentagrophytes).